We begin with the raw amino-acid sequence, 253 residues long: 3-deoxy-manno-octulosonate cytidylyltransferase (253 aa).

Belongs to the KdsB family.

The protein localises to the cytoplasm. It carries out the reaction 3-deoxy-alpha-D-manno-oct-2-ulosonate + CTP = CMP-3-deoxy-beta-D-manno-octulosonate + diphosphate. It participates in nucleotide-sugar biosynthesis; CMP-3-deoxy-D-manno-octulosonate biosynthesis; CMP-3-deoxy-D-manno-octulosonate from 3-deoxy-D-manno-octulosonate and CTP: step 1/1. The protein operates within bacterial outer membrane biogenesis; lipopolysaccharide biosynthesis. In terms of biological role, activates KDO (a required 8-carbon sugar) for incorporation into bacterial lipopolysaccharide in Gram-negative bacteria. The protein is 3-deoxy-manno-octulosonate cytidylyltransferase of Acidithiobacillus ferrooxidans (strain ATCC 23270 / DSM 14882 / CIP 104768 / NCIMB 8455) (Ferrobacillus ferrooxidans (strain ATCC 23270)).